We begin with the raw amino-acid sequence, 295 residues long: Trimeric intracellular cation channel type A (295 aa).

The Lumenal segment spans residues 1-18 (MELLSALSLGELALSFSR). The helical transmembrane segment at 19 to 39 (VPLFPVFDLSYFIVSILYLKY) threads the bilayer. At 40 to 51 (EPGAVELSRRHP) the chain is on the cytoplasmic side. A helical membrane pass occupies residues 52–72 (VASWLCAMLHCFGSYILADLL). The Lumenal segment spans residues 73 to 85 (LGEPLIDYFSNNS). G74 contributes to the Ca(2+) binding site. The chain crosses the membrane as a helical span at residues 86–106 (SILLASAVWYLIFFCPLDLFY). Over 107-144 (KCVCFLPVKLIFVAMKEVVRVRKIAVGIHHAHHHYHHG) the chain is Cytoplasmic. 2 residues coordinate a 1,2-diacyl-sn-glycero-3-phospho-(1D-myo-inositol-4,5-bisphosphate): K122 and R126. The helical transmembrane segment at 145-165 (WFIMIATGWVKGSGVALLSNV) threads the bilayer. At 166–178 (EQLLRGVWKPETN) the chain is on the lumenal side. Residues 179-199 (EILHMSFPTKASLYGAILFTL) form a helical membrane-spanning segment. Residues 200–209 (QQTRWLPVSK) lie on the Cytoplasmic side of the membrane. The chain crosses the membrane as a helical span at residues 210 to 230 (ASLIFIFTMFMVSCKVFLTAT). Residues 231–234 (HSHS) lie on the Lumenal side of the membrane. Residues 235 to 255 (SPFDVLEAYVCPVLFGTGSGG) traverse the membrane as a helical segment. Residues 256–295 (DHPQDNHGAWPGGPPSGALATKSKEELSEGSRKKKTKKAD) are Cytoplasmic-facing. The segment at 256–295 (DHPQDNHGAWPGGPPSGALATKSKEELSEGSRKKKTKKAD) is disordered. Residues 277 to 286 (KSKEELSEGS) are compositionally biased toward basic and acidic residues.

Belongs to the TMEM38 family. Homotrimer; conformation seems to be controled by binding to diacylglycerol (DAG).

It localises to the sarcoplasmic reticulum membrane. Its subcellular location is the nucleus membrane. It carries out the reaction K(+)(in) = K(+)(out). Its activity is regulated as follows. Channel activity is activated by a change of voltage within the sarcoplasmic reticulum lumen and blocked by luminal high Ca(2+) levels. Functionally, intracellular monovalent cation channel required for maintenance of rapid intracellular calcium release. Acts as a potassium counter-ion channel that functions in synchronization with calcium release from intracellular stores. Opened by a change of voltage within the sarcoplasmic reticulum lumen. This Oryctolagus cuniculus (Rabbit) protein is Trimeric intracellular cation channel type A.